Consider the following 118-residue polypeptide: Phosphoribosyl-AMP cyclohydrolase (118 aa).

D87 provides a ligand contact to Mg(2+). C88 is a binding site for Zn(2+). Mg(2+) contacts are provided by D89 and D91. Zn(2+) is bound by residues C104 and C111.

This sequence belongs to the PRA-CH family. Homodimer. The cofactor is Mg(2+). Requires Zn(2+) as cofactor.

The protein resides in the cytoplasm. The catalysed reaction is 1-(5-phospho-beta-D-ribosyl)-5'-AMP + H2O = 1-(5-phospho-beta-D-ribosyl)-5-[(5-phospho-beta-D-ribosylamino)methylideneamino]imidazole-4-carboxamide. It participates in amino-acid biosynthesis; L-histidine biosynthesis; L-histidine from 5-phospho-alpha-D-ribose 1-diphosphate: step 3/9. Its function is as follows. Catalyzes the hydrolysis of the adenine ring of phosphoribosyl-AMP. The chain is Phosphoribosyl-AMP cyclohydrolase from Corynebacterium glutamicum (strain R).